The chain runs to 373 residues: NAD(P)H-quinone oxidoreductase subunit 1 (373 aa).

The next 9 helical transmembrane spans lie at 29-49, 64-84, 98-118, 129-149, 177-197, 202-222, 267-287, 309-329, and 348-368; these read LWVPLPMLLMVIAATLGVMVM, IGPNMAGPQGVLIPIADGIKL, VLFTLGPILVFLPVFLCYLVV, IAIGVFFLIATSSVQPIGLLM, LALSVLAVVLMSNGLDTVGIV, GLGILSWNVWRQPIGFVIFLI, LLASLIAAVLYLGGWSFVVPV, VLGILMTMVKAFIFVFLAILL, and FLLPVSFVNLLLTAALKLAFP.

The protein belongs to the complex I subunit 1 family. As to quaternary structure, NDH-1 is composed of at least 11 different subunits.

The protein localises to the cellular thylakoid membrane. The enzyme catalyses a plastoquinone + NADH + (n+1) H(+)(in) = a plastoquinol + NAD(+) + n H(+)(out). It carries out the reaction a plastoquinone + NADPH + (n+1) H(+)(in) = a plastoquinol + NADP(+) + n H(+)(out). Functionally, NDH-1 shuttles electrons from an unknown electron donor, via FMN and iron-sulfur (Fe-S) centers, to quinones in the respiratory and/or the photosynthetic chain. The immediate electron acceptor for the enzyme in this species is believed to be plastoquinone. Couples the redox reaction to proton translocation, and thus conserves the redox energy in a proton gradient. In Synechococcus sp. (strain JA-3-3Ab) (Cyanobacteria bacterium Yellowstone A-Prime), this protein is NAD(P)H-quinone oxidoreductase subunit 1.